The chain runs to 118 residues: Large ribosomal subunit protein uL24 (118 aa).

The protein belongs to the universal ribosomal protein uL24 family. In terms of assembly, part of the 50S ribosomal subunit.

Its function is as follows. One of two assembly initiator proteins, it binds directly to the 5'-end of the 23S rRNA, where it nucleates assembly of the 50S subunit. Functionally, one of the proteins that surrounds the polypeptide exit tunnel on the outside of the subunit. The chain is Large ribosomal subunit protein uL24 from Prochlorococcus marinus (strain MIT 9313).